Here is a 162-residue protein sequence, read N- to C-terminus: Lipoprotein signal peptidase (162 aa).

The next 2 membrane-spanning stretches (helical) occupy residues 56-76 (FLPP…VVWY) and 84-104 (SPLF…NLID). Catalysis depends on residues D113 and D139. The chain crosses the membrane as a helical span at residues 132 to 152 (WPIFNVADSCITIGACMIVLF).

It belongs to the peptidase A8 family.

It is found in the cell inner membrane. The catalysed reaction is Release of signal peptides from bacterial membrane prolipoproteins. Hydrolyzes -Xaa-Yaa-Zaa-|-(S,diacylglyceryl)Cys-, in which Xaa is hydrophobic (preferably Leu), and Yaa (Ala or Ser) and Zaa (Gly or Ala) have small, neutral side chains.. It functions in the pathway protein modification; lipoprotein biosynthesis (signal peptide cleavage). This protein specifically catalyzes the removal of signal peptides from prolipoproteins. This is Lipoprotein signal peptidase from Chlorobaculum tepidum (strain ATCC 49652 / DSM 12025 / NBRC 103806 / TLS) (Chlorobium tepidum).